Consider the following 513-residue polypeptide: RNA-binding protein FUS (513 aa).

Residues 1–14 are compositionally biased toward polar residues; it reads MASNDYTQQATQSY. The disordered stretch occupies residues 1–273; that stretch reads MASNDYTQQA…SEQDNSDNNT (273 aa). 3 stretches are compositionally biased toward low complexity: residues 20–36, 43–63, and 84–124; these read QPGQGYSQQSNQPYGQQ, QSTDTSGYGQSSYSGSYGQTQ, and SSQS…SGYG. Over residues 125 to 139 the composition is skewed to gly residues; the sequence is QPQGGGYGQQSGYGG. Over residues 140-164 the composition is skewed to low complexity; that stretch reads QQQSYGQQQSYNPPQGYGQQSQYNS. Gly residues-rich tracts occupy residues 165–176 and 185–219; these read SGGGGGGGGGSY and SGGGGGGYGNQDQSGGYGGGQQDRGGRGRGGGGGY. Arg211 and Arg213 each carry asymmetric dimethylarginine; alternate. 2 positions are modified to omega-N-methylarginine; alternate: Arg211 and Arg213. Asymmetric dimethylarginine occurs at positions 229, 231, 235, 238, and 246. Residues 231 to 246 show a composition bias toward gly residues; sequence RGGGRGGRGGMGGSDR. A Phosphoserine modification is found at Ser264. One can recognise an RRM domain in the interval 272-358; it reads NTIFVQGLGE…NPIKVSFATR (87 aa). Position 273 is a phosphothreonine (Thr273). A Glycyl lysine isopeptide (Lys-Gly) (interchain with G-Cter in SUMO2) cross-link involves residue Lys321. Ser327 bears the Phosphoserine mark. 2 disordered regions span residues 362–411 and 431–513; these read FNRG…QRAG and CNQC…ERPY. Residues Arg364, Arg370, Arg373, Arg375, and Arg381 each carry the asymmetric dimethylarginine modification. Residues 364–408 are compositionally biased toward gly residues; sequence RGGGNGRGGRGRGGPMGRGGYGGGGSGGGGRGGFPSGGGGGGGQQ. Asymmetric dimethylarginine; alternate is present on Arg394. Residue Arg394 is modified to Omega-N-methylarginine; alternate. A RanBP2-type zinc finger spans residues 409 to 440; the sequence is RAGDWKCPNPTCENMNFSWRNECNQCKAPKPD. Residues 441-455 are compositionally biased toward gly residues; the sequence is GPGGGPGGSHMGGNY. Basic and acidic residues predominate over residues 456–480; the sequence is GDDRRGGRGGYDRGGYRGRGGDRGG. 8 positions are modified to asymmetric dimethylarginine: Arg460, Arg463, Arg468, Arg472, Arg474, Arg478, Arg482, and Arg485. Over residues 481–495 the composition is skewed to gly residues; it reads FRGGRGGGDRGGFGP. An Asymmetric dimethylarginine; alternate modification is found at Arg490. Omega-N-methylarginine; alternate is present on Arg490. The span at 498-513 shows a compositional bias: basic and acidic residues; it reads MDSRGEHRQDRRERPY.

It belongs to the RRM TET family. In terms of assembly, self-oligomerizes (via N-terminal region). Oligomerization is essential for chromatin binding. Component of nuclear riboprotein complexes. Interacts with ILF3, TDRD3 and SF1. Interacts through its C-terminus with SFRS13A. Interacts with OTUB1 and SARNP. Interacts with LRSAM1. Interacts with SAFB1 in a DNA-dependent manner; this interaction tethers FUS to chromatin. Interacts with MATR3. Interacts with SNRNP70 and POLR2A; these interactions couple RNA transcription and splicing. Interacts (through its RNA-binding domain) with RALY (through its RNA-binding domain); both are components of the same RNPs. Post-translationally, phosphorylated in its N-terminal serine residues upon induced DNA damage. ATM and DNA-PK are able to phosphorylate FUS N-terminal region.

The protein resides in the nucleus. In terms of biological role, DNA/RNA-binding protein that plays a role in various cellular processes such as transcription regulation, RNA splicing, RNA transport, DNA repair and damage response. Binds to ssRNA containing the consensus sequence 5'-AGGUAA-3'. Binds to nascent pre-mRNAs and acts as a molecular mediator between RNA polymerase II and U1 small nuclear ribonucleoprotein thereby coupling transcription and splicing. Also binds its own pre-mRNA and autoregulates its expression; this autoregulation mechanism is mediated by non-sense-mediated decay. Plays a role in DNA repair mechanisms by promoting D-loop formation and homologous recombination during DNA double-strand break repair. In neuronal cells, plays crucial roles in dendritic spine formation and stability, RNA transport, mRNA stability and synaptic homeostasis. The sequence is that of RNA-binding protein FUS (FUS) from Bos taurus (Bovine).